The primary structure comprises 689 residues: Transcription termination factor Rho (689 aa).

The span at 1 to 20 (MPRTPKNQNLEQNTQTQSLT) shows a compositional bias: polar residues. Disordered regions lie at residues 1–90 (MPRT…KQPV) and 151–213 (AQAQ…NRNN). A compositionally biased stretch (basic residues) spans 52–65 (PKRRGRKPNPKTKA). Low complexity-rich tracts occupy residues 170-183 (NAQQ…QNGE) and 191-213 (NNQN…NRNN). In terms of domain architecture, Rho RNA-BD spans 287–362 (IIYTEGVLEV…RRIDRVNFEE (76 aa)). Residues 405 to 410 (GKGQRS), 417 to 422 (RTGKTV), and R448 each bind ATP.

The protein belongs to the Rho family. As to quaternary structure, homohexamer. The homohexamer assembles into an open ring structure.

In terms of biological role, facilitates transcription termination by a mechanism that involves Rho binding to the nascent RNA, activation of Rho's RNA-dependent ATPase activity, and release of the mRNA from the DNA template. The chain is Transcription termination factor Rho from Fibrobacter succinogenes (strain ATCC 19169 / S85).